Consider the following 184-residue polypeptide: Ribosome maturation factor RimM (184 aa).

Positions 93 to 165 (DEGWYEHELV…YILITPPSGL (73 aa)) constitute a PRC barrel domain.

This sequence belongs to the RimM family. In terms of assembly, binds ribosomal protein uS19.

The protein resides in the cytoplasm. Functionally, an accessory protein needed during the final step in the assembly of 30S ribosomal subunit, possibly for assembly of the head region. Essential for efficient processing of 16S rRNA. May be needed both before and after RbfA during the maturation of 16S rRNA. It has affinity for free ribosomal 30S subunits but not for 70S ribosomes. The sequence is that of Ribosome maturation factor RimM from Paenarthrobacter aurescens (strain TC1).